The chain runs to 71 residues: IRCFITPDVTSQICADGHVCYTKTWCDAWCTSRGKRVDLGCAATCPTVKTGVDIKCCSTDNCNPFPTRNRP.

5 cysteine pairs are disulfide-bonded: Cys-3–Cys-20, Cys-14–Cys-41, Cys-26–Cys-30, Cys-45–Cys-56, and Cys-57–Cys-62.

Expressed by the venom gland.

The protein localises to the secreted. In terms of biological role, binds with high affinity to muscular (alpha-1-beta-1-gamma-delta/CHRNA1-CHRNB1-CHRNG-CHRND) and neuronal (alpha-7/CHRNA7) nicotinic acetylcholine receptor (nAChR) and inhibits acetylcholine from binding to the receptor, thereby impairing neuromuscular and neuronal transmission. Ranges of nAChR inhibition are in nanomolar (competitive binding with alpha-bungarotoxin gives Ki=1.66 nM on muscle nAChR and Ki=4.84 nM on alpha-7). Also shows moderate inhibition on GABA(A) alpha-1-beta-3-gamma-2 receptor (GABRA1-GABRB3-GABRG2) (IC(50)=0.68 uM), and a lower inhibition on alpha-1-beta-2-gamma-2 (GABRA1-GABRB2-GABRG2) and alpha-3-beta-2-gamma-2 (GABRA3-GABRB2-GABRG2). The chain is Long neurotoxin Tx-NM3-1 from Naja melanoleuca (Forest cobra).